A 219-amino-acid polypeptide reads, in one-letter code: GPI ethanolamine phosphate transferase, stabilizing subunit (219 aa).

A run of 6 helical transmembrane segments spans residues 11–31 (YTNL…SFFV), 42–62 (TWLC…YLVV), 86–106 (CFLM…APLI), 113–133 (FLFA…LLGP), 155–175 (LQIT…PIPL), and 189–209 (TLGA…WIYW).

It belongs to the PIGF family. In terms of assembly, part of the ethanolamine phosphate transferase 3 complex composed by PIGO and PIGF. Part of the ethanolamine phosphate transferase 2 complex with PIGG. PIGF is required to stabilize PIGG and PIGO.

The protein resides in the endoplasmic reticulum membrane. It participates in glycolipid biosynthesis; glycosylphosphatidylinositol-anchor biosynthesis. Functionally, stabilizing subunit of the ethanolamine phosphate transferase 3 and ethanolamine phosphate transferase 2 complexes that sequentially transfer an ethanolamine phosphate (EtNP) from a phosphatidylethanolamine (PE) to the 6-OH position of the third alpha-1,2-linked mannose and the second alpha-1,6-linked mannose of the alpha-D-Man-(1-&gt;2)-alpha-D-Man-(1-&gt;6)-2-PEtn-alpha-D-Man-(1-&gt;4)-alpha-D-GlcN-(1-&gt;6)-(1-radyl,2-acyl-sn-glycero-3-phospho)-2-acyl-inositol (also termed H6) intermediate to generate a 6-PEtn-alpha-D-Man-(1-&gt;2)-6-PEtn-alpha-D-Man-(1-&gt;6)-2-PEtn-alpha-D-Man-(1-&gt;4)-alpha-D-GlcN-(1-&gt;6)-(1-radyl,2-acyl-sn-glycero-3-phospho)-2-acyl-inositol (also termed H8). Participates in the tenth and eleventh steps of the glycosylphosphatidylinositol-anchor biosynthesis, in association with PIGO and PIGG, respectively. In Mus musculus (Mouse), this protein is GPI ethanolamine phosphate transferase, stabilizing subunit.